A 112-amino-acid polypeptide reads, in one-letter code: DNA-binding protein TK1278 (112 aa).

It belongs to the PDCD5 family.

The sequence is that of DNA-binding protein TK1278 from Thermococcus kodakarensis (strain ATCC BAA-918 / JCM 12380 / KOD1) (Pyrococcus kodakaraensis (strain KOD1)).